The sequence spans 392 residues: Galactokinase (392 aa).

Residue 33-36 (EHTD) participates in substrate binding. Residues Ser67 and 129 to 135 (GSGLSSS) contribute to the ATP site. Residues Ser135 and Glu167 each coordinate Mg(2+). Asp179 acts as the Proton acceptor in catalysis. A substrate-binding site is contributed by Tyr229.

Belongs to the GHMP kinase family. GalK subfamily.

The protein localises to the cytoplasm. The enzyme catalyses alpha-D-galactose + ATP = alpha-D-galactose 1-phosphate + ADP + H(+). The protein operates within carbohydrate metabolism; galactose metabolism. In terms of biological role, catalyzes the transfer of the gamma-phosphate of ATP to D-galactose to form alpha-D-galactose-1-phosphate (Gal-1-P). The polypeptide is Galactokinase (Limosilactobacillus reuteri (strain DSM 20016) (Lactobacillus reuteri)).